We begin with the raw amino-acid sequence, 210 residues long: 2-hydroxy-3-keto-5-methylthiopentenyl-1-phosphate phosphatase (210 aa).

This sequence belongs to the HAD-like hydrolase superfamily. MtnX family.

The enzyme catalyses 2-hydroxy-5-methylsulfanyl-3-oxopent-1-enyl phosphate + H2O = 1,2-dihydroxy-5-(methylsulfanyl)pent-1-en-3-one + phosphate. It functions in the pathway amino-acid biosynthesis; L-methionine biosynthesis via salvage pathway; L-methionine from S-methyl-5-thio-alpha-D-ribose 1-phosphate: step 4/6. In terms of biological role, dephosphorylates 2-hydroxy-3-keto-5-methylthiopentenyl-1-phosphate (HK-MTPenyl-1-P) yielding 1,2-dihydroxy-3-keto-5-methylthiopentene (DHK-MTPene). This chain is 2-hydroxy-3-keto-5-methylthiopentenyl-1-phosphate phosphatase, found in Microcystis aeruginosa (strain NIES-843 / IAM M-2473).